The chain runs to 338 residues: Anthranilate phosphoribosyltransferase (338 aa).

5-phospho-alpha-D-ribose 1-diphosphate is bound by residues Gly-78, 81–82, Ser-86, 88–91, 106–114, and Ser-118; these read GD, NIST, and KHGNRSITS. Gly-78 is an anthranilate binding site. Residue Ser-90 participates in Mg(2+) binding. Asn-109 is a binding site for anthranilate. Anthranilate is bound at residue Arg-163. 2 residues coordinate Mg(2+): Asp-222 and Glu-223.

It belongs to the anthranilate phosphoribosyltransferase family. In terms of assembly, homodimer. Requires Mg(2+) as cofactor.

The enzyme catalyses N-(5-phospho-beta-D-ribosyl)anthranilate + diphosphate = 5-phospho-alpha-D-ribose 1-diphosphate + anthranilate. Its pathway is amino-acid biosynthesis; L-tryptophan biosynthesis; L-tryptophan from chorismate: step 2/5. Functionally, catalyzes the transfer of the phosphoribosyl group of 5-phosphorylribose-1-pyrophosphate (PRPP) to anthranilate to yield N-(5'-phosphoribosyl)-anthranilate (PRA). This is Anthranilate phosphoribosyltransferase from Staphylococcus haemolyticus (strain JCSC1435).